A 146-amino-acid polypeptide reads, in one-letter code: Interleukin-3 (146 aa).

A signal peptide spans 1-17 (MSSLSILHLLLLLLSLH). Residue Asn65 is glycosylated (N-linked (GlcNAc...) asparagine).

The protein belongs to the IL-3 family. Monomer. In terms of tissue distribution, activated T-cells, mast cells, natural killer cells.

It localises to the secreted. In terms of biological role, granulocyte/macrophage colony-stimulating factors are cytokines that act in hematopoiesis by controlling the production, differentiation, and function of 2 related white cell populations of the blood, the granulocytes and the monocytes-macrophages. Functionally, this CSF induces granulocytes, macrophages, mast cells, stem cells, erythroid cells, eosinophils and megakaryocytes. The sequence is that of Interleukin-3 (IL3) from Ovis aries (Sheep).